A 220-amino-acid polypeptide reads, in one-letter code: Orotate phosphoribosyltransferase (220 aa).

Lysine 26 contributes to the 5-phospho-alpha-D-ribose 1-diphosphate binding site. Residue 34–35 participates in orotate binding; that stretch reads FF. 5-phospho-alpha-D-ribose 1-diphosphate-binding positions include 72-73, arginine 101, lysine 102, lysine 105, histidine 107, and 126-134; these read YK and DDVITAGTS. Orotate-binding residues include threonine 130 and arginine 158.

It belongs to the purine/pyrimidine phosphoribosyltransferase family. PyrE subfamily. As to quaternary structure, homodimer. Mg(2+) is required as a cofactor.

The catalysed reaction is orotidine 5'-phosphate + diphosphate = orotate + 5-phospho-alpha-D-ribose 1-diphosphate. It functions in the pathway pyrimidine metabolism; UMP biosynthesis via de novo pathway; UMP from orotate: step 1/2. Its function is as follows. Catalyzes the transfer of a ribosyl phosphate group from 5-phosphoribose 1-diphosphate to orotate, leading to the formation of orotidine monophosphate (OMP). The protein is Orotate phosphoribosyltransferase of Bordetella avium (strain 197N).